We begin with the raw amino-acid sequence, 264 residues long: Thymidylate synthase (264 aa).

Position 21 (arginine 21) interacts with dUMP. Histidine 51 serves as a coordination point for (6R)-5,10-methylene-5,6,7,8-tetrahydrofolate. Residue 126–127 (RR) coordinates dUMP. Residue cysteine 146 is the Nucleophile of the active site. DUMP is bound by residues 166–169 (RSGD), asparagine 177, and 207–209 (HLY). Aspartate 169 contributes to the (6R)-5,10-methylene-5,6,7,8-tetrahydrofolate binding site. Alanine 263 contacts (6R)-5,10-methylene-5,6,7,8-tetrahydrofolate.

Belongs to the thymidylate synthase family. Bacterial-type ThyA subfamily. As to quaternary structure, homodimer.

The protein resides in the cytoplasm. The catalysed reaction is dUMP + (6R)-5,10-methylene-5,6,7,8-tetrahydrofolate = 7,8-dihydrofolate + dTMP. It participates in pyrimidine metabolism; dTTP biosynthesis. In terms of biological role, catalyzes the reductive methylation of 2'-deoxyuridine-5'-monophosphate (dUMP) to 2'-deoxythymidine-5'-monophosphate (dTMP) while utilizing 5,10-methylenetetrahydrofolate (mTHF) as the methyl donor and reductant in the reaction, yielding dihydrofolate (DHF) as a by-product. This enzymatic reaction provides an intracellular de novo source of dTMP, an essential precursor for DNA biosynthesis. In Xanthomonas oryzae pv. oryzae (strain MAFF 311018), this protein is Thymidylate synthase.